The primary structure comprises 435 residues: tRNA(Ile)-lysidine synthase (435 aa).

24–29 contributes to the ATP binding site; that stretch reads SGGLDS.

The protein belongs to the tRNA(Ile)-lysidine synthase family.

It is found in the cytoplasm. It carries out the reaction cytidine(34) in tRNA(Ile2) + L-lysine + ATP = lysidine(34) in tRNA(Ile2) + AMP + diphosphate + H(+). Functionally, ligates lysine onto the cytidine present at position 34 of the AUA codon-specific tRNA(Ile) that contains the anticodon CAU, in an ATP-dependent manner. Cytidine is converted to lysidine, thus changing the amino acid specificity of the tRNA from methionine to isoleucine. In Chromobacterium violaceum (strain ATCC 12472 / DSM 30191 / JCM 1249 / CCUG 213 / NBRC 12614 / NCIMB 9131 / NCTC 9757 / MK), this protein is tRNA(Ile)-lysidine synthase.